The sequence spans 510 residues: Olfactomedin-4 (510 aa).

The signal sequence occupies residues 1 to 20; it reads MRPGLSFLLALLFFLGQAAG. N72 and N136 each carry an N-linked (GlcNAc...) asparagine glycan. The stretch at 155-234 forms a coiled coil; the sequence is DFELIKVEVK…ECEASKDQNT (80 aa). One can recognise an Olfactomedin-like domain in the interval 245-507; that stretch reads SCGHGGVVNI…LLNYDLSVLQ (263 aa). An intrachain disulfide couples C246 to C437. A glycan (N-linked (GlcNAc...) asparagine) is linked at N253.

As to quaternary structure, homomultimer; disulfide-linked. Interacts with NDUFA13. Interacts with cell surface lectins (locutions ricinus communis agglutinin I, concanavalin-A and wheat germ agglutinin) and cadherin. In terms of processing, N-glycosylated. Expressed during myeloid lineage development. Much higher expression in bone marrow neutrophils than in peripheral blood neutrophils (at protein level). Strongly expressed in the prostate, small intestine and colon and moderately expressed in the bone marrow and stomach. Overexpressed in some pancreatic cancer tissues.

It localises to the secreted. The protein resides in the extracellular space. It is found in the mitochondrion. Its function is as follows. May promote proliferation of pancreatic cancer cells by favoring the transition from the S to G2/M phase. In myeloid leukemic cell lines, inhibits cell growth and induces cell differentiation and apoptosis. May play a role in the inhibition of EIF4EBP1 phosphorylation/deactivation. Facilitates cell adhesion, most probably through interaction with cell surface lectins and cadherin. The chain is Olfactomedin-4 (OLFM4) from Homo sapiens (Human).